A 118-amino-acid chain; its full sequence is MAGVWVFEDGMVRRADSEAPSRGRGVGGGGGGGKVLVHVPSSEVVTSYEVLERRLRELGWERYLNDPCLLQFHQRSTVHLISVPRDFSRLKLVHMYDVVVKTRNVFEVRDAATTASPP.

This sequence belongs to the FPF1 family.

This chain is Flowering-promoting factor 1-like protein 4, found in Oryza sativa subsp. japonica (Rice).